We begin with the raw amino-acid sequence, 302 residues long: Eukaryotic translation initiation factor 3 subunit F (302 aa).

One can recognise an MPN domain in the interval 23-165 (IVIEPAVLFS…IKTYVSSPVG (143 aa)). A Phosphoserine modification is found at Ser-162.

Belongs to the eIF-3 subunit F family. As to quaternary structure, component of the eukaryotic translation initiation factor 3 (eIF-3) complex. The eIF-3 complex appears to include tif32/eif3a, SPAC25G10.08/eif3b, tif33/eif3c, SPBC4C3.07/eif3f, tif35/eif3g and sum1/eif3i. This set of common subunits may also associate exclusively with either moe1/eif3d and int6/eif3e, or with SPAC821.05/eif3h and SPAC1751.03/eif3m. The eIF-3 complex may also include SPAC3A12.13c/eif3j.

The protein localises to the cytoplasm. Component of the eukaryotic translation initiation factor 3 (eIF-3) complex, which is involved in protein synthesis of a specialized repertoire of mRNAs and, together with other initiation factors, stimulates binding of mRNA and methionyl-tRNAi to the 40S ribosome. The eIF-3 complex specifically targets and initiates translation of a subset of mRNAs involved in cell proliferation. The chain is Eukaryotic translation initiation factor 3 subunit F from Schizosaccharomyces pombe (strain 972 / ATCC 24843) (Fission yeast).